A 506-amino-acid polypeptide reads, in one-letter code: Ribose import ATP-binding protein RbsA 1 (506 aa).

ABC transporter domains follow at residues 5–241 (LALT…VGRR) and 254–498 (RDAA…TSDA). 37 to 44 (GENGAGKS) serves as a coordination point for ATP.

It belongs to the ABC transporter superfamily. Ribose importer (TC 3.A.1.2.1) family. The complex is composed of an ATP-binding protein (RbsA), two transmembrane proteins (RbsC) and a solute-binding protein (RbsB).

The protein localises to the cell inner membrane. The enzyme catalyses D-ribose(out) + ATP + H2O = D-ribose(in) + ADP + phosphate + H(+). Its function is as follows. Part of the ABC transporter complex RbsABC involved in ribose import. Responsible for energy coupling to the transport system. This is Ribose import ATP-binding protein RbsA 1 from Burkholderia thailandensis (strain ATCC 700388 / DSM 13276 / CCUG 48851 / CIP 106301 / E264).